The primary structure comprises 128 residues: Mini-ribonuclease 3 (128 aa).

Residue Asp17 is part of the active site.

Belongs to the MrnC RNase family. As to quaternary structure, homodimer. The cofactor is Mg(2+).

It localises to the cytoplasm. Functionally, involved in correct processing of both the 5' and 3' ends of 23S rRNA precursor. Processes 30S rRNA precursor transcript even in absence of ribonuclease 3 (Rnc); Rnc processes 30S rRNA into smaller rRNA precursors. The protein is Mini-ribonuclease 3 of Streptococcus pneumoniae (strain ATCC BAA-255 / R6).